The sequence spans 297 residues: GTPase Era (297 aa).

Residues 7–174 (HSGFVSIIGR…VQVVRDLLPE (168 aa)) form the Era-type G domain. Residues 15–22 (GRPNVGKS) are G1. Residue 15–22 (GRPNVGKS) participates in GTP binding. The segment at 41-45 (QTTRN) is G2. The tract at residues 62 to 65 (DTPG) is G3. Residues 62–66 (DTPGI) and 124–127 (NKVD) each bind GTP. The tract at residues 124–127 (NKVD) is G4. The tract at residues 153-155 (VSA) is G5. The KH type-2 domain maps to 205–282 (THDEVPYSVA…FLELFVRVSR (78 aa)).

It belongs to the TRAFAC class TrmE-Era-EngA-EngB-Septin-like GTPase superfamily. Era GTPase family. Monomer.

The protein localises to the cytoplasm. The protein resides in the cell inner membrane. An essential GTPase that binds both GDP and GTP, with rapid nucleotide exchange. Plays a role in 16S rRNA processing and 30S ribosomal subunit biogenesis and possibly also in cell cycle regulation and energy metabolism. This Geotalea daltonii (strain DSM 22248 / JCM 15807 / FRC-32) (Geobacter daltonii) protein is GTPase Era.